A 595-amino-acid polypeptide reads, in one-letter code: uncharacterized protein (595 aa).

3 disordered regions span residues 50 to 159 (VNPS…KTKK), 398 to 430 (TYPT…PPSL), and 450 to 595 (VTEG…SLDK). Residues 83–122 (SNKSSALKKSNKSSNKSSNKSSNKSSNKSSNKSSNKSSNK) are compositionally biased toward low complexity. The span at 123–132 (FPDKSDKSDS) shows a compositional bias: basic and acidic residues. Positions 137–146 (DNSDDSDDSS) are enriched in acidic residues. Positions 398–409 (TYPTTPLFSEPT) are enriched in low complexity. Residues 410–420 (IPKPPQQPTTE) are compositionally biased toward pro residues. A compositionally biased stretch (low complexity) spans 421–430 (PPSGFKPPSL). Residues 454–463 (KVVESDDHTS) are compositionally biased toward basic and acidic residues. The span at 467–476 (IPPPPPPPPS) shows a compositional bias: pro residues. Over residues 477 to 529 (ISSDNSSPNKSVKSSTKSSTKSSTKSSTKSSTKSSTKSPSKTPVKSPIKSSSK) the composition is skewed to low complexity. Positions 530-542 (LSDKKSPTKKIES) are enriched in basic and acidic residues. Acidic residues predominate over residues 544–553 (GESDSESDSE). A compositionally biased stretch (basic residues) spans 559–570 (TKKSTNKIKKIT). Residues 571 to 580 (NNKLENSNTK) are compositionally biased toward low complexity. Residues 581-595 (NNKKFSKKKTISLDK) are compositionally biased toward basic residues.

This is an uncharacterized protein from Acanthamoeba polyphaga mimivirus (APMV).